The chain runs to 355 residues: 3-isopropylmalate dehydrogenase (355 aa).

77–90 (GAKWDNLPREKRPE) is a binding site for NAD(+). Residues arginine 97, arginine 107, arginine 135, and aspartate 220 each contribute to the substrate site. Residues aspartate 220, aspartate 244, and aspartate 248 each contribute to the Mg(2+) site. NAD(+) is bound at residue 277–289 (GSAPDIAGQGIAN).

Belongs to the isocitrate and isopropylmalate dehydrogenases family. LeuB type 1 subfamily. Homodimer. Mg(2+) is required as a cofactor. Mn(2+) serves as cofactor.

The protein localises to the cytoplasm. It carries out the reaction (2R,3S)-3-isopropylmalate + NAD(+) = 4-methyl-2-oxopentanoate + CO2 + NADH. Its pathway is amino-acid biosynthesis; L-leucine biosynthesis; L-leucine from 3-methyl-2-oxobutanoate: step 3/4. Functionally, catalyzes the oxidation of 3-carboxy-2-hydroxy-4-methylpentanoate (3-isopropylmalate) to 3-carboxy-4-methyl-2-oxopentanoate. The product decarboxylates to 4-methyl-2 oxopentanoate. This Sulfurimonas denitrificans (strain ATCC 33889 / DSM 1251) (Thiomicrospira denitrificans (strain ATCC 33889 / DSM 1251)) protein is 3-isopropylmalate dehydrogenase.